Reading from the N-terminus, the 251-residue chain is 3-deoxy-manno-octulosonate cytidylyltransferase (251 aa).

It belongs to the KdsB family.

It localises to the cytoplasm. The catalysed reaction is 3-deoxy-alpha-D-manno-oct-2-ulosonate + CTP = CMP-3-deoxy-beta-D-manno-octulosonate + diphosphate. It functions in the pathway nucleotide-sugar biosynthesis; CMP-3-deoxy-D-manno-octulosonate biosynthesis; CMP-3-deoxy-D-manno-octulosonate from 3-deoxy-D-manno-octulosonate and CTP: step 1/1. It participates in bacterial outer membrane biogenesis; lipopolysaccharide biosynthesis. Its function is as follows. Activates KDO (a required 8-carbon sugar) for incorporation into bacterial lipopolysaccharide in Gram-negative bacteria. This Agrobacterium fabrum (strain C58 / ATCC 33970) (Agrobacterium tumefaciens (strain C58)) protein is 3-deoxy-manno-octulosonate cytidylyltransferase.